The following is a 209-amino-acid chain: Uracil phosphoribosyltransferase (209 aa).

Residues R79, R104, and 131-139 (DPMLATGGT) contribute to the 5-phospho-alpha-D-ribose 1-diphosphate site. Uracil-binding positions include I194 and 199–201 (GDA). D200 contacts 5-phospho-alpha-D-ribose 1-diphosphate.

This sequence belongs to the UPRTase family. Mg(2+) serves as cofactor.

It carries out the reaction UMP + diphosphate = 5-phospho-alpha-D-ribose 1-diphosphate + uracil. It functions in the pathway pyrimidine metabolism; UMP biosynthesis via salvage pathway; UMP from uracil: step 1/1. Allosterically activated by GTP. Catalyzes the conversion of uracil and 5-phospho-alpha-D-ribose 1-diphosphate (PRPP) to UMP and diphosphate. This Pseudoalteromonas atlantica (strain T6c / ATCC BAA-1087) protein is Uracil phosphoribosyltransferase.